A 231-amino-acid chain; its full sequence is Orotidine 5'-phosphate decarboxylase (231 aa).

Substrate-binding positions include D11, K33, 60–69, T120, R181, Q190, G210, and R211; that span reads DLKFHDIPNT. K62 serves as the catalytic Proton donor.

Belongs to the OMP decarboxylase family. Type 1 subfamily. In terms of assembly, homodimer.

It carries out the reaction orotidine 5'-phosphate + H(+) = UMP + CO2. The protein operates within pyrimidine metabolism; UMP biosynthesis via de novo pathway; UMP from orotate: step 2/2. Functionally, catalyzes the decarboxylation of orotidine 5'-monophosphate (OMP) to uridine 5'-monophosphate (UMP). This is Orotidine 5'-phosphate decarboxylase from Photobacterium profundum (strain SS9).